A 488-amino-acid polypeptide reads, in one-letter code: SAGA complex subunit HFI1 (488 aa).

Disordered stretches follow at residues 1–58 (MSAI…QGPN) and 352–383 (QLDDDKNEDECADEAKSINNGNNSSKDDIGDI). Positions 37–58 (AVSNHTEPNNGNNETAEPQGPN) are enriched in polar residues.

Component of the 1.8 MDa SAGA (Spt-Ada-Gcn5 acetyltransferase) complex, which is composed of 19 subunits TRA1, SPT7, TAF5, NGG1/ADA3, SGF73, SPT20/ADA5, SPT8, TAF12, TAF6, HFI1/ADA1, UBP8, GCN5, ADA2, SPT3, SGF29, TAF10, TAF9, SGF11 and SUS1. The SAGA complex is composed of 4 modules, namely the HAT (histone acetyltransferase) module (GCN5, ADA2, NGG1/ADA3 and SGF29), the DUB (deubiquitinating) module (UBP8, SGF11, SGF73 and SUS1), the core or TAF (TBP-associated factor) module (TAF5, TAF6, TAF9, TAF10 and TAF12), and the Tra1 or SPT (Suppressor of Ty) module (TRA1, HFI1/ADA1, SPT3, SPT7, SPT8 and SPT20/ADA5). The Tra1/SPT module binds activators, the core module recruits TBP (TATA-binding protein), the HAT module contains the histone H3 acetyltransferase GCN5, and the DUB module comprises the histone H2B deubiquitinase UBP8. Also identified in an altered form of SAGA, named SALSA (SAGA altered, Spt8 absent) or SLIK (SAGA-like) complex, which contains a C-terminal truncated form of SPT7 and is missing SPT8. However, it has been shown that the SAGA and SAGA-like SALSA/SLIK transcriptional coactivators are structurally and biochemically equivalent. Component of an ADA/GCN5 complex that consists of HFI1/ADA1, ADA2, NGG1/ADA3, SPT20/ADA5 and GCN5 and probably is a subcomplex of SAGA.

Its subcellular location is the nucleus. In terms of biological role, component of the transcription coactivator SAGA complex. SAGA acts as a general cofactor required for essentially all RNA polymerase II transcription. At the promoters, SAGA is required for transcription pre-initiation complex (PIC) recruitment. It influences RNA polymerase II transcriptional activity through different activities such as TBP interaction (via core/TAF module) and promoter selectivity, interaction with transcription activators (via Tra1/SPT module), and chromatin modification through histone acetylation (via HAT module) and deubiquitination (via DUB module). SAGA preferentially acetylates histones H3 (to form H3K9ac, H3K14ac, H3K18ac and H3K23ac) and H2B and deubiquitinates histone H2B. SAGA interacts with DNA via upstream activating sequences (UASs). Also identified in a modified version of SAGA named SALSA or SLIK. The cleavage of SPT7 and the absence of the SPT8 subunit in SLIK neither drive any major conformational differences in its structure compared with SAGA, nor significantly affect HAT, DUB, or DNA-binding activities. This Saccharomyces cerevisiae (strain ATCC 204508 / S288c) (Baker's yeast) protein is SAGA complex subunit HFI1 (HFI1).